Here is a 455-residue protein sequence, read N- to C-terminus: Transmembrane protease serine 5 (455 aa).

Residues 1-49 lie on the Cytoplasmic side of the membrane; sequence MSPTLDDQSPMEIRCTEEGAGPGIFRMELGDQRQSISQSQRWCCLQRGC. The chain crosses the membrane as a helical; Signal-anchor for type II membrane protein span at residues 50-70; that stretch reads VILGVLGLLAGAGIASWLLVL. Residues 71-455 are Extracellular-facing; that stretch reads YLWPAASPSI…DWIHDTVQVR (385 aa). The SRCR domain occupies 112–207; it reads FRINGEDLLL…SGRIVSLKCS (96 aa). 7 disulfides stabilise this stretch: Cys-135-Cys-196, Cys-148-Cys-206, Cys-209-Cys-328, Cys-243-Cys-259, Cys-342-Cys-411, Cys-374-Cys-390, and Cys-401-Cys-429. 2 N-linked (GlcNAc...) asparagine glycosylation sites follow: Asn-163 and Asn-170. The region spanning 218–453 is the Peptidase S1 domain; it reads IVGGQAVASG…FLDWIHDTVQ (236 aa). Catalysis depends on charge relay system residues His-258 and Asp-308. 2 N-linked (GlcNAc...) asparagine glycosylation sites follow: Asn-319 and Asn-375. Ser-405 serves as the catalytic Charge relay system.

The protein belongs to the peptidase S1 family.

The protein resides in the cell membrane. Its function is as follows. May play a role in hearing. This chain is Transmembrane protease serine 5 (Tmprss5), found in Mus musculus (Mouse).